The following is a 515-amino-acid chain: Methionine--tRNA ligase (515 aa).

The short motif at 13–23 (AYPNGKPHIGH) is the 'HIGH' region element. The short motif at 300–304 (KMSKS) is the 'KMSKS' region element. Lysine 303 is a binding site for ATP.

The protein belongs to the class-I aminoacyl-tRNA synthetase family. MetG type 2B subfamily. As to quaternary structure, monomer.

The protein resides in the cytoplasm. It catalyses the reaction tRNA(Met) + L-methionine + ATP = L-methionyl-tRNA(Met) + AMP + diphosphate. Its function is as follows. Is required not only for elongation of protein synthesis but also for the initiation of all mRNA translation through initiator tRNA(fMet) aminoacylation. This is Methionine--tRNA ligase from Brucella suis biovar 1 (strain 1330).